We begin with the raw amino-acid sequence, 98 residues long: NADH-ubiquinone oxidoreductase chain 4L (98 aa).

A run of 3 helical transmembrane segments spans residues 1–21 (MPVV…GLLV), 29–49 (SLLC…VTVL), and 61–81 (IILL…LVMV).

The protein belongs to the complex I subunit 4L family. Core subunit of respiratory chain NADH dehydrogenase (Complex I) which is composed of 45 different subunits.

Its subcellular location is the mitochondrion inner membrane. The catalysed reaction is a ubiquinone + NADH + 5 H(+)(in) = a ubiquinol + NAD(+) + 4 H(+)(out). Its function is as follows. Core subunit of the mitochondrial membrane respiratory chain NADH dehydrogenase (Complex I) which catalyzes electron transfer from NADH through the respiratory chain, using ubiquinone as an electron acceptor. Part of the enzyme membrane arm which is embedded in the lipid bilayer and involved in proton translocation. The protein is NADH-ubiquinone oxidoreductase chain 4L (MT-ND4L) of Ursus arctos (Brown bear).